The sequence spans 534 residues: Lysophosphatidylcholine acyltransferase 1 (534 aa).

Residues 1-25 (MRLRGRGPRAAPSSSSGAGDARRLA) are disordered. Residues 1–57 (MRLRGRGPRAAPSSSSGAGDARRLAPPGRNPFVHELRLSALQKAQVAFMTLTLFPIR) are Cytoplasmic-facing. A compositionally biased stretch (low complexity) spans 8–19 (PRAAPSSSSGAG). The helical; Signal-anchor for type II membrane protein transmembrane segment at 58-78 (LLFAAFMMLLAWPFALVASLG) threads the bilayer. Over 79-534 (PPDKEPEQPL…GRKNSCKKVD (456 aa)) the chain is Lumenal. Positions 135 to 140 (HSSYFD) match the HXXXXD motif motif. EF-hand domains are found at residues 379-414 (PVSD…VCRP) and 451-486 (ISEL…YPDF). 4 residues coordinate Ca(2+): D392, S394, E398, and E403. A Di-lysine motif motif is present at residues 531–534 (KKVD).

This sequence belongs to the 1-acyl-sn-glycerol-3-phosphate acyltransferase family. In terms of tissue distribution, enriched in alveolar type II cells of lung. Also highly expressed in stomach.

Its subcellular location is the endoplasmic reticulum membrane. The protein resides in the golgi apparatus membrane. It localises to the cell membrane. The protein localises to the lipid droplet. It carries out the reaction a 1-acyl-sn-glycero-3-phosphocholine + an acyl-CoA = a 1,2-diacyl-sn-glycero-3-phosphocholine + CoA. The catalysed reaction is a 1-O-alkyl-sn-glycero-3-phosphocholine + acetyl-CoA = a 1-O-alkyl-2-acetyl-sn-glycero-3-phosphocholine + CoA. It catalyses the reaction a 1-acyl-sn-glycero-3-phosphate + an acyl-CoA = a 1,2-diacyl-sn-glycero-3-phosphate + CoA. The enzyme catalyses a 1-O-(1Z-alkenyl)-sn-glycero-3-phosphocholine + an acyl-CoA = a 1-O-(1Z-alkenyl)-2-acyl-sn-glycero-3-phosphocholine + CoA. It carries out the reaction 1-acyl-sn-glycero-3-phospho-(1'-sn-glycerol) + an acyl-CoA = a 1,2-diacyl-sn-glycero-3-phospho-(1'-sn-glycerol) + CoA. The catalysed reaction is a 1-acyl-sn-glycero-3-phosphocholine + hexadecanoyl-CoA = 1-acyl-2-hexadecanoyl-sn-glycero-3-phosphocholine + CoA. It catalyses the reaction a 1-acyl-sn-glycero-3-phosphate + hexadecanoyl-CoA = 1-acyl-2-hexadecanoyl-sn-glycero-3-phosphate + CoA. The enzyme catalyses 1-acyl-sn-glycero-3-phospho-(1'-sn-glycerol) + hexadecanoyl-CoA = 1-acyl-2-hexadecanoyl-sn-glycero-3-phospho-(1'-sn-glycerol) + CoA. It carries out the reaction 1-hexadecanoyl-sn-glycero-3-phosphocholine + hexadecanoyl-CoA = 1,2-dihexadecanoyl-sn-glycero-3-phosphocholine + CoA. The catalysed reaction is 1-O-hexadecyl-sn-glycero-3-phosphocholine + hexadecanoyl-CoA = 1-O-hexadecyl-2-hexadecanoyl-sn-glycero-3-phosphocholine + CoA. It catalyses the reaction a 1-O-(1Z-alkenyl)-sn-glycero-3-phosphocholine + hexadecanoyl-CoA = 1-O-(1Z)-alkenyl-2-hexadecanoyl-sn-glycero-3-phosphocholine + CoA. The enzyme catalyses 1-hexadecanoyl-sn-glycero-3-phospho-(1'-sn-glycerol) + hexadecanoyl-CoA = 1,2-dihexadecanoyl-sn-glycero-3-phospho-(1'-sn-glycerol) + CoA. It carries out the reaction 1-dodecanoyl-sn-glycero-3-phosphocholine + hexadecanoyl-CoA = 1-dodecanoyl-2-hexadecanoyl-sn-glycero-3-phosphocholine + CoA. The catalysed reaction is 1-tetradecanoyl-sn-glycero-3-phosphocholine + hexadecanoyl-CoA = 1-tetradecanoyl-2-hexadecanoyl-sn-glycero-3-phosphocholine + CoA. It catalyses the reaction 1-O-octadecyl-sn-glycero-3-phosphocholine + hexadecanoyl-CoA = 1-O-octadecyl-2-hexadecanoyl-sn-glycero-3-phosphocholine + CoA. The enzyme catalyses 1-octadecanoyl-sn-glycero-3-phosphocholine + hexadecanoyl-CoA = 1-octadecanoyl-2-hexadecanoyl-sn-glycero-3-phosphocholine + CoA. It carries out the reaction 1-(9Z-octadecenoyl)-sn-glycero-3-phosphocholine + hexadecanoyl-CoA = 1-(9Z-octadecenoyl)-2-hexadecanoyl-sn-glycero-3-phosphocholine + CoA. The catalysed reaction is 1-eicosanoyl-sn-glycero-3-phosphocholine + hexadecanoyl-CoA = 1-eicosanoyl-2-hexadecanoyl-sn-glycero-3-phosphocholine + CoA. It catalyses the reaction hexanoyl-CoA + 1-hexadecanoyl-sn-glycero-3-phosphocholine = 1-hexadecanoyl-2-hexanoyl-sn-glycero-3-phosphocholine + CoA. The enzyme catalyses octanoyl-CoA + 1-hexadecanoyl-sn-glycero-3-phosphocholine = 1-hexadecanoyl-2-octanoyl-sn-glycero-3-phosphocholine + CoA. It carries out the reaction decanoyl-CoA + 1-hexadecanoyl-sn-glycero-3-phosphocholine = 1-hexadecanoyl-2-decanoyl-sn-glycero-3-phosphocholine + CoA. The catalysed reaction is dodecanoyl-CoA + 1-hexadecanoyl-sn-glycero-3-phosphocholine = 1-hexadecanoyl-2-dodecanoyl-sn-glycero-3-phosphocholine + CoA. It catalyses the reaction tetradecanoyl-CoA + 1-hexadecanoyl-sn-glycero-3-phosphocholine = 1-hexadecanoyl-2-tetradecanoyl-sn-glycero-3-phosphocholine + CoA. The enzyme catalyses 1-hexadecanoyl-sn-glycero-3-phosphocholine + (9Z)-octadecenoyl-CoA = 1-hexadecanoyl-2-(9Z-octadecenoyl)-sn-glycero-3-phosphocholine + CoA. It carries out the reaction (9Z,12Z)-octadecadienoyl-CoA + 1-hexadecanoyl-sn-glycero-3-phosphocholine = 1-hexadecanoyl-2-(9Z,12Z-octadecadienoyl)-sn-glycero-3-phosphocholine + CoA. The catalysed reaction is (4Z,7Z,10Z,13Z,16Z,19Z)-docosahexaenoyl-CoA + 1-hexadecanoyl-sn-glycero-3-phosphocholine = 1-hexadecanoyl-2-(4Z,7Z,10Z,13Z,16Z,19Z-docosahexaenoyl)-sn-glycero-3-phosphocholine + CoA. It catalyses the reaction 1-hexadecanoyl-sn-glycero-3-phosphocholine + acetyl-CoA = 1-hexadecanoyl-2-acetyl-sn-glycero-3-phosphocholine + CoA. The enzyme catalyses eicosanoyl-CoA + 1-hexadecanoyl-sn-glycero-3-phosphocholine = 1-hexadecanoyl-2-eicosanoyl-sn-glycero-3-phosphocholine + CoA. It carries out the reaction 1-O-hexadecyl-sn-glycero-3-phosphocholine + acetyl-CoA = 1-O-hexadecyl-2-acetyl-sn-glycero-3-phosphocholine + CoA. It participates in lipid metabolism; phospholipid metabolism. Activity is stimulated by Mg(2+) or Mn(2+). Functionally, exhibits acyltransferase activity. Exhibits acetyltransferase activity. Activity is calcium-independent. Catalyzes the conversion of lysophosphatidylcholine (1-acyl-sn-glycero-3-phosphocholine or LPC) into phosphatidylcholine (1,2-diacyl-sn-glycero-3-phosphocholine or PC). Catalyzes the conversion 1-acyl-sn-glycerol-3-phosphate (lysophosphatidic acid or LPA) into 1,2-diacyl-sn-glycerol-3-phosphate (phosphatidic acid or PA) by incorporating an acyl moiety at the sn-2 position of the glycerol backbone. Displays a clear preference for saturated fatty acyl-CoAs, and 1-myristoyl or 1-palmitoyl LPC as acyl donors and acceptors, respectively. Involved in platelet-activating factor (PAF) biosynthesis by catalyzing the conversion of the PAF precursor, 1-O-alkyl-sn-glycero-3-phosphocholine (lyso-PAF) into 1-O-alkyl-2-acetyl-sn-glycero-3-phosphocholine (PAF). May synthesize phosphatidylcholine in pulmonary surfactant, thereby playing a pivotal role in respiratory physiology. Involved in the regulation of lipid droplet number and size. The sequence is that of Lysophosphatidylcholine acyltransferase 1 (Lpcat1) from Rattus norvegicus (Rat).